The following is a 522-amino-acid chain: Serine/threonine-protein kinase pak-2 (522 aa).

In terms of domain architecture, CRIB spans 16–29 (ISTPSNFEHRIHAG). Over residues 183–204 (TTTPQLQPKSPSTPQAMRQQPK) the composition is skewed to polar residues. A disordered region spans residues 183 to 208 (TTTPQLQPKSPSTPQAMRQQPKCTEG). The region spanning 231-482 (LTDYKQIGEG…AKDLLRHPFF (252 aa)) is the Protein kinase domain. Residues 237–245 (IGEGSTGVV) and lysine 260 each bind ATP. Aspartate 350 acts as the Proton acceptor in catalysis.

Belongs to the protein kinase superfamily. STE Ser/Thr protein kinase family. STE20 subfamily. Requires Mg(2+) as cofactor. It depends on Mn(2+) as a cofactor. Expressed in pharynx, vulva and spermatheca. Unlike other p21-activated kinases, expression is not detected in neurons.

The catalysed reaction is L-seryl-[protein] + ATP = O-phospho-L-seryl-[protein] + ADP + H(+). It catalyses the reaction L-threonyl-[protein] + ATP = O-phospho-L-threonyl-[protein] + ADP + H(+). Functionally, serine/threonine-protein kinase which plays a redundant role with pak-1 in embryogenesis but, in contrast to pak-1, is not involved in commissural axon guidance of ventral cord motoneurons or in distal tip cell (DTC) migration. The protein is Serine/threonine-protein kinase pak-2 of Caenorhabditis elegans.